Consider the following 378-residue polypeptide: T-cell immunoglobulin and mucin domain-containing protein 4 (378 aa).

An N-terminal signal peptide occupies residues 1–24 (MSKEPLILWLMIEFWWLYLTPVTS). An Ig-like V-type domain is found at 25 to 126 (ETVVTEVLGH…PGWFNDVKIN (102 aa)). At 25 to 314 (ETVVTEVLGH…SMKNEMPISQ (290 aa)) the chain is on the extracellular side. Disulfide bonds link cysteine 40-cysteine 112, cysteine 53-cysteine 64, and cysteine 59-cysteine 111. Disordered regions lie at residues 136–160 (TTTH…TRQM) and 269–304 (WKTS…GIPM). Polar residues predominate over residues 269 to 297 (WKTSDSVSSPQPGASDTAVPEQNKTTKTG). Asparagine 291 carries an N-linked (GlcNAc...) asparagine glycan. Residues 315–335 (LLMIIAPSLGFVLFALFVAFL) form a helical membrane-spanning segment. Topologically, residues 336 to 378 (LRGKLMETYCSQKHTRLDYIGDSKNVLNDVQHGREDEDGLFTL) are cytoplasmic. Serine 358 is subject to Phosphoserine.

Belongs to the immunoglobulin superfamily. TIM family. In terms of assembly, interacts with MERTK; this interaction enhances TIMD4-mediated efferocytosis. Interacts with EPHA2.

The protein localises to the cell membrane. It localises to the secreted. The protein resides in the extracellular exosome. Phosphatidylserine receptor that plays different role in immune response including phagocytosis of apoptotic cells and T-cell regulation. Controls T-cell activation in a bimodal fashion, decreasing the activation of naive T-cells by inducing cell cycle arrest, while increasing proliferation of activated T-cells by activating AKT1 and ERK1/2 phosphorylations and subsequent signaling pathways. Also plays a role in efferocytosis which is the process by which apoptotic cells are removed by phagocytic cells. Mechanistically, promotes the engulfment of apoptotic cells or exogenous particles by securing them to phagocytes through direct binding to phosphatidylserine present on apoptotic cells, while other engulfment receptors such as MERTK efficiently recognize apoptotic cells and mediate their ingestion. Additionally, promotes autophagy process by suppressing NLRP3 inflammasome activity via activation of LKB1/PRKAA1 pathway in a phosphatidylserine-dependent mechanism. Its function is as follows. (Microbial infection) Plays a positive role in exosome-mediated trafficking of HIV-1 virus and its entry into immune cells. The sequence is that of T-cell immunoglobulin and mucin domain-containing protein 4 (TIMD4) from Homo sapiens (Human).